The primary structure comprises 563 residues: NAD-dependent malic enzyme (563 aa).

The active-site Proton donor is the Y101. R154 contacts NAD(+). K172 (proton acceptor) is an active-site residue. A divalent metal cation contacts are provided by E243, D244, and D267. Positions 267 and 416 each coordinate NAD(+).

It belongs to the malic enzymes family. As to quaternary structure, homotetramer. Mg(2+) serves as cofactor. It depends on Mn(2+) as a cofactor.

The enzyme catalyses (S)-malate + NAD(+) = pyruvate + CO2 + NADH. It carries out the reaction oxaloacetate + H(+) = pyruvate + CO2. This Pseudomonas syringae pv. tomato (strain ATCC BAA-871 / DC3000) protein is NAD-dependent malic enzyme.